We begin with the raw amino-acid sequence, 281 residues long: Imidazole glycerol phosphate synthase subunit HisF (281 aa).

Active-site residues include D12 and D131. A disordered region spans residues 256-281 (VRQAEPLPQPAREGLGDSARRAMSSG).

The protein belongs to the HisA/HisF family. In terms of assembly, heterodimer of HisH and HisF.

It is found in the cytoplasm. It carries out the reaction 5-[(5-phospho-1-deoxy-D-ribulos-1-ylimino)methylamino]-1-(5-phospho-beta-D-ribosyl)imidazole-4-carboxamide + L-glutamine = D-erythro-1-(imidazol-4-yl)glycerol 3-phosphate + 5-amino-1-(5-phospho-beta-D-ribosyl)imidazole-4-carboxamide + L-glutamate + H(+). It functions in the pathway amino-acid biosynthesis; L-histidine biosynthesis; L-histidine from 5-phospho-alpha-D-ribose 1-diphosphate: step 5/9. In terms of biological role, IGPS catalyzes the conversion of PRFAR and glutamine to IGP, AICAR and glutamate. The HisF subunit catalyzes the cyclization activity that produces IGP and AICAR from PRFAR using the ammonia provided by the HisH subunit. This chain is Imidazole glycerol phosphate synthase subunit HisF, found in Thermosynechococcus vestitus (strain NIES-2133 / IAM M-273 / BP-1).